A 311-amino-acid chain; its full sequence is tRNA-cytidine(32) 2-sulfurtransferase (311 aa).

A PP-loop motif motif is present at residues 47 to 52 (SGGKDS). Residues cysteine 122, cysteine 125, and cysteine 213 each coordinate [4Fe-4S] cluster.

Belongs to the TtcA family. As to quaternary structure, homodimer. Requires Mg(2+) as cofactor. The cofactor is [4Fe-4S] cluster.

Its subcellular location is the cytoplasm. The enzyme catalyses cytidine(32) in tRNA + S-sulfanyl-L-cysteinyl-[cysteine desulfurase] + AH2 + ATP = 2-thiocytidine(32) in tRNA + L-cysteinyl-[cysteine desulfurase] + A + AMP + diphosphate + H(+). It participates in tRNA modification. Functionally, catalyzes the ATP-dependent 2-thiolation of cytidine in position 32 of tRNA, to form 2-thiocytidine (s(2)C32). The sulfur atoms are provided by the cysteine/cysteine desulfurase (IscS) system. The protein is tRNA-cytidine(32) 2-sulfurtransferase of Salmonella choleraesuis (strain SC-B67).